The following is a 715-amino-acid chain: ATP-dependent DNA helicase Hel308 (715 aa).

ATP contacts are provided by residues Gln-35 and 53 to 60; that span reads SPTGSGKT. One can recognise a Helicase ATP-binding domain in the interval 40-203; sequence KKGLLDGNRL…WLGAEPVATN (164 aa). The DEAH box motif lies at 152–155; sequence DELH. Positions 236 to 442 constitute a Helicase C-terminal domain; that stretch reads HGDDAIIAYT…ERAFYTFLLG (207 aa).

The protein belongs to the helicase family. Hel308 subfamily. Monomer. Interacts with PINA ATPase which decreases both DNA helicase activities of this protein.

It catalyses the reaction Couples ATP hydrolysis with the unwinding of duplex DNA by translocating in the 3'-5' direction.. It carries out the reaction ATP + H2O = ADP + phosphate + H(+). The catalysed reaction is Couples ATP hydrolysis with the unwinding of duplex DNA at the replication fork by translocating in the 5'-3' direction. This creates two antiparallel DNA single strands (ssDNA). The leading ssDNA polymer is the template for DNA polymerase III holoenzyme which synthesizes a continuous strand.. Its activity is regulated as follows. PINA inhibits the (weak) 5'-3' but not the 3'-5' helicase activity of this protein on overhang substrates. Its function is as follows. DNA-dependent ATPase and 3'-5' DNA helicase that may be involved in repair of stalled replication forks. In terms of biological role, has predominantly 3'-5' helicase activity but also a weak 5'-3' helicase activity. Has the ability to unwind replication forks, preferentially removing the lagging strand. Hjc, Hjm (Hel308) and branch migration ATPase PINA coordinate HJ migration and cleavage of replication forks in a coordinated way. This chain is ATP-dependent DNA helicase Hel308, found in Saccharolobus islandicus (strain REY15A) (Sulfolobus islandicus).